A 279-amino-acid polypeptide reads, in one-letter code: Large ribosomal subunit protein uL2 (279 aa).

Residues 224 to 279 (AMNAVDHPMGGGRGHSKGGNIPRSPWNQPSRGLKTRPKKSWDWMIVSDRRKNKAGK) form a disordered region.

Belongs to the universal ribosomal protein uL2 family. As to quaternary structure, part of the 50S ribosomal subunit. Forms a bridge to the 30S subunit in the 70S ribosome.

Its function is as follows. One of the primary rRNA binding proteins. Required for association of the 30S and 50S subunits to form the 70S ribosome, for tRNA binding and peptide bond formation. It has been suggested to have peptidyltransferase activity; this is somewhat controversial. Makes several contacts with the 16S rRNA in the 70S ribosome. This Elusimicrobium minutum (strain Pei191) protein is Large ribosomal subunit protein uL2.